The sequence spans 1403 residues: Baculoviral IAP repeat-containing protein 1a (1403 aa).

3 BIR repeats span residues 63–128, 162–228, and 281–346; these read RLKT…EFLQ, RLES…EFLQ, and RMDT…VFLQ. 4 residues coordinate Zn(2+): cysteine 315, cysteine 318, histidine 335, and cysteine 342. The 295-residue stretch at 464-758 folds into the NACHT domain; it reads SVMCVEGETG…EFLAAMRLTE (295 aa). Lysine 476 serves as a coordination point for ATP.

As to quaternary structure, interacts (via NACHT domain) with APAF1 (via CARD and NACHT domains).

Anti-apoptotic protein which acts by inhibiting the activities of CASP3, CASP7 and CASP9. Can inhibit the autocleavage of pro-CASP9 and cleavage of pro-CASP3 by CASP9. Capable of inhibiting CASP9 autoproteolysis at 'Asp-315' and decreasing the rate of auto proteolysis at 'Asp-330'. Acts as a mediator of neuronal survival in pathological conditions. Prevents motor-neuron apoptosis induced by a variety of signals. This Mus musculus (Mouse) protein is Baculoviral IAP repeat-containing protein 1a (Naip1).